The chain runs to 210 residues: Thymidylate kinase (210 aa).

Position 11-18 (11-18 (GVDGAGKT)) interacts with ATP.

The protein belongs to the thymidylate kinase family.

It catalyses the reaction dTMP + ATP = dTDP + ADP. Its function is as follows. Phosphorylation of dTMP to form dTDP in both de novo and salvage pathways of dTTP synthesis. The sequence is that of Thymidylate kinase (tmk) from Mycoplasma pneumoniae (strain ATCC 29342 / M129 / Subtype 1) (Mycoplasmoides pneumoniae).